A 310-amino-acid polypeptide reads, in one-letter code: 4-diphosphocytidyl-2-C-methyl-D-erythritol kinase (310 aa).

The active site involves lysine 12. 97 to 107 (PIGAGLAGGSS) is an ATP binding site. Aspartate 139 is a catalytic residue.

The protein belongs to the GHMP kinase family. IspE subfamily.

The catalysed reaction is 4-CDP-2-C-methyl-D-erythritol + ATP = 4-CDP-2-C-methyl-D-erythritol 2-phosphate + ADP + H(+). It functions in the pathway isoprenoid biosynthesis; isopentenyl diphosphate biosynthesis via DXP pathway; isopentenyl diphosphate from 1-deoxy-D-xylulose 5-phosphate: step 3/6. Functionally, catalyzes the phosphorylation of the position 2 hydroxy group of 4-diphosphocytidyl-2C-methyl-D-erythritol. This chain is 4-diphosphocytidyl-2-C-methyl-D-erythritol kinase, found in Synechococcus sp. (strain CC9311).